The chain runs to 275 residues: 4-hydroxy-tetrahydrodipicolinate reductase (275 aa).

NAD(+) contacts are provided by residues 8-13, 100-102, and 126-129; these read GATGRM, GTT, and SPNM. H160 functions as the Proton donor/acceptor in the catalytic mechanism. Residue H161 participates in (S)-2,3,4,5-tetrahydrodipicolinate binding. Catalysis depends on K164, which acts as the Proton donor. A (S)-2,3,4,5-tetrahydrodipicolinate-binding site is contributed by 170–171; sequence GT.

This sequence belongs to the DapB family.

The protein resides in the cytoplasm. The enzyme catalyses (S)-2,3,4,5-tetrahydrodipicolinate + NAD(+) + H2O = (2S,4S)-4-hydroxy-2,3,4,5-tetrahydrodipicolinate + NADH + H(+). It carries out the reaction (S)-2,3,4,5-tetrahydrodipicolinate + NADP(+) + H2O = (2S,4S)-4-hydroxy-2,3,4,5-tetrahydrodipicolinate + NADPH + H(+). It participates in amino-acid biosynthesis; L-lysine biosynthesis via DAP pathway; (S)-tetrahydrodipicolinate from L-aspartate: step 4/4. Catalyzes the conversion of 4-hydroxy-tetrahydrodipicolinate (HTPA) to tetrahydrodipicolinate. This Methanopyrus kandleri (strain AV19 / DSM 6324 / JCM 9639 / NBRC 100938) protein is 4-hydroxy-tetrahydrodipicolinate reductase.